The following is a 247-amino-acid chain: Protein SODIUM POTASSIUM ROOT DEFECTIVE 3 (247 aa).

The tract at residues 130-166 (GSTGQDTVATEESEASAPKRGSSGPVEEKKKSSGSGS) is disordered. The HMA domain maps to 167–235 (DQVVVLRVSL…KVKNAQFWTP (69 aa)). Positions 180 and 183 each coordinate a metal cation.

Its subcellular location is the cytoplasm. In terms of biological role, heavy metal-associated protein involved in salt tolerance. This Arabidopsis thaliana (Mouse-ear cress) protein is Protein SODIUM POTASSIUM ROOT DEFECTIVE 3.